The sequence spans 428 residues: Glucose-1-phosphate adenylyltransferase (428 aa).

Alpha-D-glucose 1-phosphate-binding positions include Tyr114, Gly179, 194–195, and Ser212; that span reads EK.

This sequence belongs to the bacterial/plant glucose-1-phosphate adenylyltransferase family. In terms of assembly, homotetramer.

It carries out the reaction alpha-D-glucose 1-phosphate + ATP + H(+) = ADP-alpha-D-glucose + diphosphate. Its pathway is glycan biosynthesis; glycogen biosynthesis. Functionally, involved in the biosynthesis of ADP-glucose, a building block required for the elongation reactions to produce glycogen. Catalyzes the reaction between ATP and alpha-D-glucose 1-phosphate (G1P) to produce pyrophosphate and ADP-Glc. This Yersinia pseudotuberculosis serotype IB (strain PB1/+) protein is Glucose-1-phosphate adenylyltransferase.